The following is a 613-amino-acid chain: UvrABC system protein C (613 aa).

The region spanning D13–I92 is the GIY-YIG domain. Residues D204–L239 form the UVR domain.

It belongs to the UvrC family. In terms of assembly, interacts with UvrB in an incision complex.

The protein localises to the cytoplasm. The UvrABC repair system catalyzes the recognition and processing of DNA lesions. UvrC both incises the 5' and 3' sides of the lesion. The N-terminal half is responsible for the 3' incision and the C-terminal half is responsible for the 5' incision. In Ruminiclostridium cellulolyticum (strain ATCC 35319 / DSM 5812 / JCM 6584 / H10) (Clostridium cellulolyticum), this protein is UvrABC system protein C.